The following is a 481-amino-acid chain: 3-isopropylmalate dehydratase large subunit (481 aa).

[4Fe-4S] cluster is bound by residues Cys357, Cys417, and Cys420. The span at 429–441 (SPGQRCASTSNRN) shows a compositional bias: polar residues. Residues 429–451 (SPGQRCASTSNRNFEGRQGKGGR) form a disordered region.

This sequence belongs to the aconitase/IPM isomerase family. LeuC type 1 subfamily. In terms of assembly, heterodimer of LeuC and LeuD. [4Fe-4S] cluster serves as cofactor.

The enzyme catalyses (2R,3S)-3-isopropylmalate = (2S)-2-isopropylmalate. Its pathway is amino-acid biosynthesis; L-leucine biosynthesis; L-leucine from 3-methyl-2-oxobutanoate: step 2/4. In terms of biological role, catalyzes the isomerization between 2-isopropylmalate and 3-isopropylmalate, via the formation of 2-isopropylmaleate. This chain is 3-isopropylmalate dehydratase large subunit, found in Mycobacterium sp. (strain KMS).